The sequence spans 313 residues: Protein KRE1 (313 aa).

The N-terminal stretch at 1–26 (MMRRTLLHSFATLLLSLSLWSAAVMA) is a signal peptide. Copy 1 of the repeat occupies 72–86 (TTTNDVGTTVTLTQT). Residues 72 to 141 (TTTNDVGTTV…LGTTVTLTQT (70 aa)) form a 2 X approximate repeats region. Positions 94 to 114 (PTTTTSTSSTGKTTTTVPTAT) are disordered. Repeat unit 2 spans residues 127–141 (TTTNDLGTTVTLTQT). Residues 147–181 (TSATSSASSSVSSSVSSSGSSSSVKTTTSTGSAVA) show a composition bias toward low complexity. The tract at residues 147 to 198 (TSATSSASSSVSSSVSSSGSSSSVKTTTSTGSAVAETGTRPDPSTDFTEPPV) is disordered. Asn-288 is lipidated: GPI-anchor amidated asparagine. Positions 289 to 313 (EAQHLGMSSFTSILGGLLTVLIWFL) are cleaved as a propeptide — removed in mature form.

It belongs to the KRE1 family. Post-translationally, extensively modified; probably through addition of O-linked mannose residues. The GPI-anchor is attached to the protein in the endoplasmic reticulum and serves to target the protein to the cell surface. There, the glucosamine-inositol phospholipid moiety is cleaved off and the GPI-modified mannoprotein is covalently attached via its lipidless GPI glycan remnant to the 1,6-beta-glucan of the outer cell wall layer.

It localises to the cell membrane. It is found in the secreted. The protein localises to the cell wall. Its function is as follows. Involved in a late stage of cell wall 1,6-beta-glucan synthesis and assembly. Has a structural, rather than enzymic, function within cell wall 1,6-beta-glucan assembly and architecture, possibly by being involved in covalently cross-linking 1,6-beta-glucans to other cell wall components such as 1,3-beta-glucan, chitin and certain mannoproteins. Acts as the plasma membrane receptor for the yeast K1 viral toxin. This chain is Protein KRE1 (KRE1), found in Saccharomyces cerevisiae (strain ATCC 204508 / S288c) (Baker's yeast).